Consider the following 762-residue polypeptide: Protein PHTF1 (762 aa).

The region spanning 6–150 is the PHTF domain; that stretch reads RDAISWYQKK…VHCQIVSTQI (145 aa). 3 helical membrane passes run 77 to 97, 99 to 119, and 121 to 141; these read GLVR…VTSL, IFVW…LYLM, and PIVN…MGTV. The interval 152–184 is disordered; the sequence is RPSGNNGNRRRRKLRKTVNGDGSRENGNNSSDK. Residues asparagine 179 and asparagine 180 are each glycosylated (N-linked (GlcNAc...) asparagine). Phosphoserine occurs at positions 272, 276, 277, 334, and 336. Disordered stretches follow at residues 344–380 and 393–415; these read SAAF…ETED and RSSV…TKRD. Over residues 348-361 the composition is skewed to low complexity; sequence SQGSRSGVSGGSRS. Residue asparagine 363 is glycosylated (N-linked (GlcNAc...) asparagine). Basic and acidic residues predominate over residues 365–376; it reads SRRDSESTRHDS. Asparagine 431 carries an N-linked (GlcNAc...) asparagine glycan. Transmembrane regions (helical) follow at residues 473–493, 512–532, 611–631, and 645–665; these read GVGY…FPFL, EILT…LSII, VVVS…CAQV, and WEFL…ASLG. Residues asparagine 674 and asparagine 733 are each glycosylated (N-linked (GlcNAc...) asparagine). The helical transmembrane segment at 737-757 threads the bilayer; sequence VVILSAVSGVISDLLGFNIRL.

In terms of assembly, interacts with FEM1B. As to expression, widely expressed with highest levels in testis.

The protein localises to the endoplasmic reticulum membrane. It is found in the golgi apparatus. The protein resides in the cis-Golgi network membrane. The protein is Protein PHTF1 of Homo sapiens (Human).